We begin with the raw amino-acid sequence, 671 residues long: DNA ligase (671 aa).

NAD(+) is bound by residues 31-35 (DAEYD), 80-81 (SL), and Glu-110. The active-site N6-AMP-lysine intermediate is Lys-112. 4 residues coordinate NAD(+): Arg-133, Glu-167, Lys-283, and Lys-307. Cys-401, Cys-404, Cys-419, and Cys-424 together coordinate Zn(2+). In terms of domain architecture, BRCT spans 587–671 (EEELVFAGKT…YLPDEGGLNE (85 aa)).

This sequence belongs to the NAD-dependent DNA ligase family. LigA subfamily. The cofactor is Mg(2+). Mn(2+) serves as cofactor.

The enzyme catalyses NAD(+) + (deoxyribonucleotide)n-3'-hydroxyl + 5'-phospho-(deoxyribonucleotide)m = (deoxyribonucleotide)n+m + AMP + beta-nicotinamide D-nucleotide.. In terms of biological role, DNA ligase that catalyzes the formation of phosphodiester linkages between 5'-phosphoryl and 3'-hydroxyl groups in double-stranded DNA using NAD as a coenzyme and as the energy source for the reaction. It is essential for DNA replication and repair of damaged DNA. The polypeptide is DNA ligase (Listeria monocytogenes serotype 4b (strain CLIP80459)).